Consider the following 181-residue polypeptide: Shikimate kinase 2 (181 aa).

12-17 (GCGKTT) lines the ATP pocket. Positions 16 and 32 each coordinate Mg(2+). Substrate is bound by residues aspartate 34, arginine 58, and glycine 79. The interval 112 to 126 (EAEPEADLRPTLTGK) is LID domain. Arginine 120 serves as a coordination point for ATP. Arginine 139 is a binding site for substrate.

Belongs to the shikimate kinase family. AroL subfamily. In terms of assembly, monomer. Mg(2+) is required as a cofactor.

Its subcellular location is the cytoplasm. The catalysed reaction is shikimate + ATP = 3-phosphoshikimate + ADP + H(+). It functions in the pathway metabolic intermediate biosynthesis; chorismate biosynthesis; chorismate from D-erythrose 4-phosphate and phosphoenolpyruvate: step 5/7. Functionally, catalyzes the specific phosphorylation of the 3-hydroxyl group of shikimic acid using ATP as a cosubstrate. In Salmonella dublin (strain CT_02021853), this protein is Shikimate kinase 2.